The following is a 290-amino-acid chain: Ribosomal RNA small subunit methyltransferase A (290 aa).

Residues asparagine 27, leucine 29, glycine 54, glutamate 75, aspartate 100, and asparagine 125 each coordinate S-adenosyl-L-methionine.

The protein belongs to the class I-like SAM-binding methyltransferase superfamily. rRNA adenine N(6)-methyltransferase family. RsmA subfamily.

The protein resides in the cytoplasm. The catalysed reaction is adenosine(1518)/adenosine(1519) in 16S rRNA + 4 S-adenosyl-L-methionine = N(6)-dimethyladenosine(1518)/N(6)-dimethyladenosine(1519) in 16S rRNA + 4 S-adenosyl-L-homocysteine + 4 H(+). Specifically dimethylates two adjacent adenosines (A1518 and A1519) in the loop of a conserved hairpin near the 3'-end of 16S rRNA in the 30S particle. May play a critical role in biogenesis of 30S subunits. This Streptococcus pneumoniae (strain JJA) protein is Ribosomal RNA small subunit methyltransferase A.